Here is a 258-residue protein sequence, read N- to C-terminus: Phosphoadenosine 5'-phosphosulfate reductase (258 aa).

Cysteine 244 (nucleophile; cysteine thiosulfonate intermediate) is an active-site residue.

Belongs to the PAPS reductase family. CysH subfamily.

Its subcellular location is the cytoplasm. The catalysed reaction is [thioredoxin]-disulfide + sulfite + adenosine 3',5'-bisphosphate + 2 H(+) = [thioredoxin]-dithiol + 3'-phosphoadenylyl sulfate. It functions in the pathway sulfur metabolism; hydrogen sulfide biosynthesis; sulfite from sulfate: step 3/3. Catalyzes the formation of sulfite from phosphoadenosine 5'-phosphosulfate (PAPS) using thioredoxin as an electron donor. This chain is Phosphoadenosine 5'-phosphosulfate reductase, found in Vibrio vulnificus (strain CMCP6).